A 399-amino-acid chain; its full sequence is Ankyrin repeat domain-containing protein 65 (399 aa).

ANK repeat units lie at residues Gln-40–Glu-69, Ala-73–Ala-102, Ala-106–Ala-135, Thr-139–Ala-168, Arg-176–Gly-205, Leu-207–Ala-231, Ala-235–Ile-264, His-268–Ala-297, Leu-301–Ala-330, and Leu-334–Leu-363. Residues Asp-377–Gly-399 are disordered.

The polypeptide is Ankyrin repeat domain-containing protein 65 (ANKRD65) (Homo sapiens (Human)).